Reading from the N-terminus, the 424-residue chain is L-glutamine:2-deoxy-scyllo-inosose aminotransferase (424 aa).

Lys202 carries the post-translational modification N6-(pyridoxal phosphate)lysine.

This sequence belongs to the DegT/DnrJ/EryC1 family. L-glutamine:2-deoxy-scyllo-inosose/scyllo-inosose aminotransferase subfamily. Pyridoxal 5'-phosphate serves as cofactor.

The enzyme catalyses 2-deoxy-L-scyllo-inosose + L-glutamine = 2-deoxy-scyllo-inosamine + 2-oxoglutaramate. It carries out the reaction 3-amino-2,3-dideoxy-scyllo-inosose + L-glutamine = 2-deoxystreptamine + 2-oxoglutaramate. The protein operates within metabolic intermediate biosynthesis; 2-deoxystreptamine biosynthesis; 2-deoxystreptamine from D-glucose 6-phosphate: step 2/4. Its pathway is antibiotic biosynthesis; tobramycin biosynthesis. Catalyzes the PLP-dependent transamination of 2-deoxy-scyllo-inosose (2-DOI) to form 2-deoxy-scyllo-inosamine (2-DOIA) using L-glutamine as the amino donor. Also catalyzes the transamination of 3-amino-2,3-dideoxy-scyllo-inosose (keto-2-DOIA) into 2-deoxystreptamine (2-DOS). The sequence is that of L-glutamine:2-deoxy-scyllo-inosose aminotransferase (tbmB) from Streptoalloteichus tenebrarius (strain ATCC 17920 / DSM 40477 / JCM 4838 / CBS 697.72 / NBRC 16177 / NCIMB 11028 / NRRL B-12390 / A12253. 1 / ISP 5477) (Streptomyces tenebrarius).